A 308-amino-acid chain; its full sequence is tRNA pseudouridine synthase B (308 aa).

Asp45 functions as the Nucleophile in the catalytic mechanism.

This sequence belongs to the pseudouridine synthase TruB family. Type 1 subfamily.

It carries out the reaction uridine(55) in tRNA = pseudouridine(55) in tRNA. In terms of biological role, responsible for synthesis of pseudouridine from uracil-55 in the psi GC loop of transfer RNAs. The sequence is that of tRNA pseudouridine synthase B from Gloeothece citriformis (strain PCC 7424) (Cyanothece sp. (strain PCC 7424)).